Reading from the N-terminus, the 364-residue chain is O-methyltransferase ZRP4 (364 aa).

S-adenosyl-L-methionine contacts are provided by G208, D231, D251, M252, and K265. The Proton acceptor role is filled by H269.

The protein belongs to the class I-like SAM-binding methyltransferase superfamily. Cation-independent O-methyltransferase family. COMT subfamily. In terms of assembly, homodimer. In terms of tissue distribution, accumulates preferentially in the roots and is located predominantly in the region of the endodermis, low levels are seen in the leaves, stems and other shoot organs.

Its function is as follows. May be involved in the O-methylation of suberin phenylpropanoid precursors. This is O-methyltransferase ZRP4 (ZRP4) from Zea mays (Maize).